The following is a 171-amino-acid chain: MSHNLEEKKAIVAEVSDQIAEAQAIVIAEYRGLGVGQLTQLRVKARESGIYFRVIKNTFVRRAVVDTPFSGLAESMVGPLAYGIGSDPVITAKVLHEFAKDNDRFVIKAGAMAGTVMSGKDVAALAALPSREELLSRLLGTLQAPVAKFVRTLNEVPSKFVRGLAAVCDKK.

This sequence belongs to the universal ribosomal protein uL10 family. Part of the ribosomal stalk of the 50S ribosomal subunit. The N-terminus interacts with L11 and the large rRNA to form the base of the stalk. The C-terminus forms an elongated spine to which L12 dimers bind in a sequential fashion forming a multimeric L10(L12)X complex.

Functionally, forms part of the ribosomal stalk, playing a central role in the interaction of the ribosome with GTP-bound translation factors. The sequence is that of Large ribosomal subunit protein uL10 from Nitrosomonas eutropha (strain DSM 101675 / C91 / Nm57).